The following is a 123-amino-acid chain: Histone H2B.1, embryonic (123 aa).

The tract at residues 1–32 (MAPTGQVAKKGSKKAVKPPRASGGKKRHRKRK) is disordered. A compositionally biased stretch (basic residues) spans 10–32 (KGSKKAVKPPRASGGKKRHRKRK). Serine 110 carries O-linked (GlcNAc) serine glycosylation. A Glycyl lysine isopeptide (Lys-Gly) (interchain with G-Cter in ubiquitin) cross-link involves residue lysine 118.

This sequence belongs to the histone H2B family. In terms of assembly, the nucleosome is a histone octamer containing two molecules each of H2A, H2B, H3 and H4 assembled in one H3-H4 heterotetramer and two H2A-H2B heterodimers. The octamer wraps approximately 147 bp of DNA. In terms of processing, monoubiquitination of Lys-118 gives a specific tag for epigenetic transcriptional activation and is also prerequisite for histone H3 'Lys-4' and 'Lys-79' methylation. Post-translationally, glcNAcylation at Ser-110 promotes monoubiquitination of Lys-118. It fluctuates in response to extracellular glucose, and associates with transcribed genes.

The protein resides in the nucleus. It is found in the chromosome. Its function is as follows. Core component of nucleosome. Nucleosomes wrap and compact DNA into chromatin, limiting DNA accessibility to the cellular machineries which require DNA as a template. Histones thereby play a central role in transcription regulation, DNA repair, DNA replication and chromosomal stability. DNA accessibility is regulated via a complex set of post-translational modifications of histones, also called histone code, and nucleosome remodeling. The polypeptide is Histone H2B.1, embryonic (Psammechinus miliaris (Green sea urchin)).